The chain runs to 492 residues: Probable sphingolipid transporter spinster homolog 1 (492 aa).

The helical transmembrane segment at 29–49 threads the bilayer; that stretch reads FVTILCIINLINYVDRGVIAS. N-linked (GlcNAc...) asparagine glycans are attached at residues Asn53 and Asn76. 7 helical membrane passes run 83-103, 119-139, 141-161, 169-189, 200-220, 279-299, and 317-337; these read GLLS…FAGL, VWTI…IAVF, MFVG…IDDS, FWLG…YVFG, WAFY…FCIK, VFIV…AYSY, and IFGG…SYVL. Asn341 carries an N-linked (GlcNAc...) asparagine glycan. 4 consecutive transmembrane segments (helical) span residues 348–368, 372–392, 407–427, and 442–462; these read FKLL…AFLM, YAFI…QAPV, LSMA…SSPL, and TLII…GIFM. Residue Ser472 is modified to Phosphoserine. Positions 472-481 are enriched in acidic residues; sequence SEDDEVEEDK. The interval 472 to 492 is disordered; that stretch reads SEDDEVEEDKLESKTENSTLA. Residue Asn488 is glycosylated (N-linked (GlcNAc...) asparagine).

The protein belongs to the major facilitator superfamily. Spinster (TC 2.A.1.49) family.

It is found in the late endosome membrane. The protein resides in the lysosome membrane. Probable sphingolipid transporter that plays a central role in endosomes and/or lysosomes storage. This is Probable sphingolipid transporter spinster homolog 1 from Arabidopsis thaliana (Mouse-ear cress).